The sequence spans 1086 residues: Auxin response factor 19 (1086 aa).

A DNA-binding region (TF-B3) is located at residues 126–228 (FCKTLTASDT…QLMLGIRRAN (103 aa)). The segment covering 454–485 (PSKLLNFQSPNLSSANSQFNKPNTVNHISQQM) has biased composition (polar residues). Disordered stretches follow at residues 454–504 (PSKL…QQQQ), 545–564 (QSPN…QSML), 624–647 (LSQN…QQLQ), and 659–788 (QQQS…SVFE). The span at 486–504 (QAQPAMVKSQQQQQQQQQQ) shows a compositional bias: low complexity. Positions 659 to 697 (QQQSIPPVSSSLQPQLSALQQTQSHQLQQLLSSQNQQPL) are enriched in low complexity. A compositionally biased stretch (polar residues) spans 700–710 (GNNSFPASTFM). A compositionally biased stretch (low complexity) spans 711-724 (QPPQIQVSPQQQGQ). The segment covering 747–771 (SCSTSPSANNTGHDNVSPTNFLSRN) has biased composition (polar residues). The segment covering 772–785 (QQQGQAASVSASDS) has biased composition (low complexity). In terms of domain architecture, PB1 spans 958–1051 (RTYTKVQKRG…EVQQMSLDGD (94 aa)).

This sequence belongs to the ARF family. In terms of assembly, homodimers and heterodimers. Interacts with the auxin-responsive protein IAA1. Binds to JMJ30. Binds to ATXR2 in the nucleus.

It localises to the nucleus. Its function is as follows. Auxin response factors (ARFs) are transcriptional factors that bind specifically to the DNA sequence 5'-TGTCTC-3' found in the auxin-responsive promoter elements (AuxREs). Could act as transcriptional activator or repressor. Formation of heterodimers with Aux/IAA proteins may alter their ability to modulate early auxin response genes expression. Involved in ethylene responses. Regulates lateral root formation through direct regulation of LBD16 and/or LBD29. Functionally redundant with ARF7. Involved in cellular dedifferentiation during callus formation on callus-inducing medium (CIM) and in an ATXR2-dependent manner. In Arabidopsis thaliana (Mouse-ear cress), this protein is Auxin response factor 19.